A 94-amino-acid chain; its full sequence is Small ribosomal subunit protein uS19 (94 aa).

The protein belongs to the universal ribosomal protein uS19 family.

In terms of biological role, protein S19 forms a complex with S13 that binds strongly to the 16S ribosomal RNA. This Acidobacterium capsulatum (strain ATCC 51196 / DSM 11244 / BCRC 80197 / JCM 7670 / NBRC 15755 / NCIMB 13165 / 161) protein is Small ribosomal subunit protein uS19.